The sequence spans 136 residues: Large ribosomal subunit protein uL16c (136 aa).

The disordered stretch occupies residues 1-20; it reads MLSPKRTKFRKQHRGRMKGK.

Belongs to the universal ribosomal protein uL16 family. Part of the 50S ribosomal subunit.

The protein localises to the plastid. The protein resides in the chloroplast. This chain is Large ribosomal subunit protein uL16c, found in Brachypodium distachyon (Purple false brome).